A 673-amino-acid chain; its full sequence is DNA ligase (673 aa).

NAD(+) contacts are provided by residues 33–37, 82–83, and Glu117; these read DSVYD and SL. Lys119 acts as the N6-AMP-lysine intermediate in catalysis. NAD(+) is bound by residues Arg140, Glu177, Lys295, and Lys319. Residues Cys413, Cys416, Cys431, and Cys436 each contribute to the Zn(2+) site. In terms of domain architecture, BRCT spans 595–673; the sequence is AVSQVLAGKK…EAELLALDPK (79 aa).

This sequence belongs to the NAD-dependent DNA ligase family. LigA subfamily. It depends on Mg(2+) as a cofactor. Mn(2+) is required as a cofactor.

It catalyses the reaction NAD(+) + (deoxyribonucleotide)n-3'-hydroxyl + 5'-phospho-(deoxyribonucleotide)m = (deoxyribonucleotide)n+m + AMP + beta-nicotinamide D-nucleotide.. Its function is as follows. DNA ligase that catalyzes the formation of phosphodiester linkages between 5'-phosphoryl and 3'-hydroxyl groups in double-stranded DNA using NAD as a coenzyme and as the energy source for the reaction. It is essential for DNA replication and repair of damaged DNA. The protein is DNA ligase of Synechococcus sp. (strain JA-3-3Ab) (Cyanobacteria bacterium Yellowstone A-Prime).